A 348-amino-acid polypeptide reads, in one-letter code: MKAQYFFWILFLIGFYWMIYLYQDFLMDALIAGLLCVGFFQVKVFLDKRFFNVVSSFLCVLILASVLIVPLYFIVYKSSNIIFEINFEKFSALIKWLKGIITENLSHFPTIHDGASKFLENFSAASITGYLLKISSYVGRYSLKLITDALFILGLLFFFFYYGERFYRYFLGVLPLGMNQSKKIFEEVAGILRIVLLTSLITVILEGVAFGVMIVWFGHDGWSLGILYGLASLVPAVGGALIWIPIAIYELYHGNVNEAIFIALYSILLISVLIDSVIKPILIVFIKKRIFKTTLKINEMLIFFSMIAGISQFGFWGIIVGPTITAFFIALLRLYENYFIQNEQKACE.

Transmembrane regions (helical) follow at residues 6-26 (FFWI…QDFL), 27-47 (MDAL…VFLD), 56-76 (SFLC…FIVY), 143-163 (LKLI…FYYG), 194-214 (IVLL…GVMI), 224-244 (LGIL…LIWI), 266-286 (SILL…IVFI), and 300-320 (MLIF…GIIV).

Belongs to the autoinducer-2 exporter (AI-2E) (TC 2.A.86) family.

The protein localises to the cell membrane. This chain is Putative transport protein HP_0567, found in Helicobacter pylori (strain ATCC 700392 / 26695) (Campylobacter pylori).